The sequence spans 83 residues: Turripeptide Lol11.2 (83 aa).

Positions 1–27 are cleaved as a signal peptide; sequence MARLMMTVGCLIFIVVLLDMMVPVSNT.

The protein belongs to the conopeptide I2-like superfamily. In terms of processing, contains 4 disulfide bonds. As to expression, expressed by the venom duct.

Its subcellular location is the secreted. Its function is as follows. Acts as a neurotoxin by inhibiting voltage-gated potassium channels (Kv). This is Turripeptide Lol11.2 from Iotyrris olangoensis (Sea snail).